The chain runs to 246 residues: MKILILDDEMFARQELSFLVEHSQEVDNPEIFQAEDISEAEKILFRQQIDLIFLDISLSEENGFTLANQLSQLAHPPLVVFATAYDNYAVKAFESNAVDYIMKPFEQQRVDMALSKVKKLSQLTTASDVEQAIPKKASVELLTLTLSDRSVVVKMQDIVAASVEDGELTVSTVQKTYTIRKTLNWFKSRAVAPYFLQIHRNTVINLEMIEEIQPWFNHTLLLIMSNGEKFPVGRSYLKDLNEHLTM.

One can recognise a Response regulatory domain in the interval 2–118 (KILILDDEMF…RVDMALSKVK (117 aa)). D55 carries the 4-aspartylphosphate modification. Positions 142–246 (LTLTLSDRSV…LKDLNEHLTM (105 aa)) constitute an HTH LytTR-type domain.

Post-translationally, phosphorylated by LytS.

The protein resides in the cytoplasm. In terms of biological role, member of the two-component regulatory system LytR/LytS that probably regulates genes involved in cell wall metabolism. The polypeptide is Sensory transduction protein LytR (lytR) (Streptococcus agalactiae serotype V (strain ATCC BAA-611 / 2603 V/R)).